Consider the following 86-residue polypeptide: RNA-binding protein Hfq (86 aa).

One can recognise a Sm domain in the interval 9–68; it reads DPYLNTLRKEKVPVSIYLVNGIKLQGSIESFDQFVVLLKNTVSQMVYKHAISTVVPARPV. The disordered stretch occupies residues 67–86; it reads PVRLPSPTDGEHGDSEPGNA. The span at 75-86 shows a compositional bias: basic and acidic residues; it reads DGEHGDSEPGNA.

It belongs to the Hfq family. In terms of assembly, homohexamer.

RNA chaperone that binds small regulatory RNA (sRNAs) and mRNAs to facilitate mRNA translational regulation in response to envelope stress, environmental stress and changes in metabolite concentrations. Also binds with high specificity to tRNAs. This chain is RNA-binding protein Hfq, found in Pseudomonas putida (strain GB-1).